Reading from the N-terminus, the 883-residue chain is Alanine--tRNA ligase (883 aa).

Zn(2+) is bound by residues His570, His574, Cys672, and His676.

This sequence belongs to the class-II aminoacyl-tRNA synthetase family. Requires Zn(2+) as cofactor.

The protein resides in the cytoplasm. It carries out the reaction tRNA(Ala) + L-alanine + ATP = L-alanyl-tRNA(Ala) + AMP + diphosphate. Functionally, catalyzes the attachment of alanine to tRNA(Ala) in a two-step reaction: alanine is first activated by ATP to form Ala-AMP and then transferred to the acceptor end of tRNA(Ala). Also edits incorrectly charged Ser-tRNA(Ala) and Gly-tRNA(Ala) via its editing domain. The chain is Alanine--tRNA ligase from Heliobacterium modesticaldum (strain ATCC 51547 / Ice1).